We begin with the raw amino-acid sequence, 534 residues long: Alkaline serine exoprotease A (534 aa).

The signal sequence occupies residues 1–21; that stretch reads MLKKLLSCCITSALCFHSSLA. The propeptide occupies 22–141; the sequence is FSQPNEIADS…LSLDPIVSAD (120 aa). Positions 57-134 constitute an Inhibitor I9 domain; that stretch reads RYIVVFQQPQ…YIEQDRILSL (78 aa). The Peptidase S8 domain maps to 148–419; it reads IWGLDRIDQR…KLLYSLTDAD (272 aa). Catalysis depends on charge relay system residues aspartate 180, histidine 213, and serine 363. The disordered stretch occupies residues 423-442; sequence DCGGPDPTPDPEGKLTSGVP.

The protein belongs to the peptidase S8 family.

In Vibrio alginolyticus, this protein is Alkaline serine exoprotease A (proA).